Reading from the N-terminus, the 658-residue chain is UvrABC system protein B (658 aa).

Residues 25–182 (ESLNGGNSHQ…KGLVDIQYSR (158 aa)) form the Helicase ATP-binding domain. Residue 38–45 (GVTGSGKT) participates in ATP binding. Residues 91-114 (YYDYYQPEAYIPQTDTYIEKDASI) carry the Beta-hairpin motif. The Helicase C-terminal domain occupies 429 to 595 (QIDDLYSEIN…TVQKKVHDVI (167 aa)). The region spanning 622 to 657 (KELIAKLQEEMKQAAKELEFEKAAELRDLIMELKTA) is the UVR domain.

Belongs to the UvrB family. In terms of assembly, forms a heterotetramer with UvrA during the search for lesions. Interacts with UvrC in an incision complex.

The protein resides in the cytoplasm. Functionally, the UvrABC repair system catalyzes the recognition and processing of DNA lesions. A damage recognition complex composed of 2 UvrA and 2 UvrB subunits scans DNA for abnormalities. Upon binding of the UvrA(2)B(2) complex to a putative damaged site, the DNA wraps around one UvrB monomer. DNA wrap is dependent on ATP binding by UvrB and probably causes local melting of the DNA helix, facilitating insertion of UvrB beta-hairpin between the DNA strands. Then UvrB probes one DNA strand for the presence of a lesion. If a lesion is found the UvrA subunits dissociate and the UvrB-DNA preincision complex is formed. This complex is subsequently bound by UvrC and the second UvrB is released. If no lesion is found, the DNA wraps around the other UvrB subunit that will check the other stand for damage. In Natranaerobius thermophilus (strain ATCC BAA-1301 / DSM 18059 / JW/NM-WN-LF), this protein is UvrABC system protein B.